The sequence spans 86 residues: Neuropeptide-like 3 (86 aa).

Residues 1-16 form the signal peptide; the sequence is MFKLCVFVALLSLAAA. Propeptides lie at residues 17-50 and 63-75; these read APAP…VAPQ and AITQ…LLIK. Isoleucine 85 carries the isoleucine amide modification.

The protein localises to the secreted. The polypeptide is Neuropeptide-like 3 (Nplp3) (Drosophila yakuba (Fruit fly)).